The following is a 274-amino-acid chain: NH(3)-dependent NAD(+) synthetase (274 aa).

An ATP-binding site is contributed by 46–53; that stretch reads GISGGQDS. Mg(2+) is bound at residue Asp-52. Arg-140 contacts deamido-NAD(+). Residue Thr-160 coordinates ATP. Position 165 (Glu-165) interacts with Mg(2+). The deamido-NAD(+) site is built by Lys-173 and Asp-180. ATP is bound by residues Lys-189 and Thr-211. Deamido-NAD(+) is bound at residue 260 to 261; it reads HK.

It belongs to the NAD synthetase family. Homodimer.

It carries out the reaction deamido-NAD(+) + NH4(+) + ATP = AMP + diphosphate + NAD(+) + H(+). The protein operates within cofactor biosynthesis; NAD(+) biosynthesis; NAD(+) from deamido-NAD(+) (ammonia route): step 1/1. Its function is as follows. Catalyzes the ATP-dependent amidation of deamido-NAD to form NAD. Uses ammonia as a nitrogen source. The protein is NH(3)-dependent NAD(+) synthetase of Pectobacterium atrosepticum (strain SCRI 1043 / ATCC BAA-672) (Erwinia carotovora subsp. atroseptica).